The chain runs to 586 residues: Ezrin (586 aa).

The region spanning 2 to 296 (PKPINVRVTT…NHELYMRRRK (295 aa)) is the FERM domain. Lys60 carries the N6-acetyllysine modification. The [IL]-x-C-x-x-[DE] motif motif lies at 115 to 120 (IYCPPE). Tyr146 is subject to Phosphotyrosine; by PDGFR. The interval 244 to 586 (EIRNISFNDK…KQRIDEFEAL (343 aa)) is interaction with SCYL3. The stretch at 302–462 (VQQMKAQARE…QDDLVKTKEE (161 aa)) forms a coiled coil. Residues 306–341 (KAQAREEKHQKQLERQQLETEKKRRETVEREKEQMM) are disordered. A compositionally biased stretch (basic and acidic residues) spans 308-341 (QAREEKHQKQLERQQLETEKKRRETVEREKEQMM). Tyr354 carries the post-translational modification Phosphotyrosine; by PDGFR. Ser366 bears the Phosphoserine mark. A Phosphotyrosine modification is found at Tyr478. Positions 485 to 564 (VQESLQDEGA…NENMRQGRDK (80 aa)) are disordered. The segment covering 507-528 (GIRDDRNEEKRITEAEKNERVQ) has biased composition (basic and acidic residues). The span at 530–539 (QLLTLSSELS) shows a compositional bias: polar residues. Position 535 is a phosphoserine (Ser535). The span at 540–564 (QARDENKRTHNDIIHNENMRQGRDK) shows a compositional bias: basic and acidic residues. Thr567 is subject to Phosphothreonine; by ROCK2 and PKC/PRKCI.

In terms of assembly, monomer. Homodimer. Interacts with PALS1 and NHERF2. Found in a complex with EZR, PODXL and NHERF2. Interacts with MCC, PLEKHG6, PODXL, SCYL3/PACE1, NHERF1 and TMEM8B. Interacts (when phosphorylated) with FES/FPS. Interacts with dimeric S100P, the interaction may be activating through unmasking of F-actin binding sites. Identified in complexes that contain VIM, EZR, AHNAK, BFSP1, BFSP2, ANK2, PLEC, PRX and spectrin. Detected in a complex composed of at least EZR, AHNAK, PPL and PRX. Interacts with PDPN (via cytoplasmic domain); activates RHOA and promotes epithelial-mesenchymal transition. Interacts with SPN/CD43 cytoplasmic tail, CD44 and ICAM2. Interacts with SLC9A3; interaction targets SLC9A3 to the apical membrane. Interacts with SLC9A1; regulates interactions of SLC9A1 with cytoskeletal and promotes stress fiber formation. Interacts with CLIC5; may work together in a complex which also includes RDX and MYO6 to stabilize linkages between the plasma membrane and subjacent actin cytoskeleton at the base of stereocilia. Phosphorylated by tyrosine-protein kinases. Phosphorylation by ROCK2 suppresses the head-to-tail association of the N-terminal and C-terminal halves resulting in an opened conformation which is capable of actin and membrane-binding. Post-translationally, S-nitrosylation is induced by interferon-gamma and oxidatively-modified low-densitity lipoprotein (LDL(ox)) possibly implicating the iNOS-S100A8/9 transnitrosylase complex. As to expression, expressed in cerebral cortex, basal ganglia, hippocampus, hypophysis, and optic nerve. Weakly expressed in brain stem and diencephalon. Stronger expression was detected in gray matter of frontal lobe compared to white matter (at protein level). Component of the microvilli of intestinal epithelial cells. Preferentially expressed in astrocytes of hippocampus, frontal cortex, thalamus, parahippocampal cortex, amygdala, insula, and corpus callosum. Not detected in neurons in most tissues studied.

Its subcellular location is the apical cell membrane. It is found in the cell projection. The protein localises to the microvillus membrane. The protein resides in the ruffle membrane. It localises to the cytoplasm. Its subcellular location is the cell cortex. It is found in the cytoskeleton. The protein localises to the microvillus. With respect to regulation, a head-to-tail association, of the N-terminal and C-terminal halves results in a closed conformation (inactive form) which is incapable of actin or membrane-binding. Its function is as follows. Probably involved in connections of major cytoskeletal structures to the plasma membrane. In epithelial cells, required for the formation of microvilli and membrane ruffles on the apical pole. Along with PLEKHG6, required for normal macropinocytosis. This chain is Ezrin (EZR), found in Homo sapiens (Human).